A 202-amino-acid chain; its full sequence is IMP cyclohydrolase (202 aa).

This sequence belongs to the archaeal IMP cyclohydrolase family.

It carries out the reaction IMP + H2O = 5-formamido-1-(5-phospho-D-ribosyl)imidazole-4-carboxamide. The protein operates within purine metabolism; IMP biosynthesis via de novo pathway; IMP from 5-formamido-1-(5-phospho-D-ribosyl)imidazole-4-carboxamide: step 1/1. Functionally, catalyzes the cyclization of 5-formylamidoimidazole-4-carboxamide ribonucleotide to IMP. In Methanothermobacter thermautotrophicus (strain ATCC 29096 / DSM 1053 / JCM 10044 / NBRC 100330 / Delta H) (Methanobacterium thermoautotrophicum), this protein is IMP cyclohydrolase.